A 439-amino-acid chain; its full sequence is uncharacterized protein (439 aa).

One can recognise a YcaO domain in the interval 116–439; it reads GKAASYRAAQ…PMRTPLQEAE (324 aa).

This is an uncharacterized protein from Mycobacterium tuberculosis (strain CDC 1551 / Oshkosh).